Consider the following 245-residue polypeptide: Uracil-DNA glycosylase (245 aa).

The active-site Proton acceptor is aspartate 82.

This sequence belongs to the uracil-DNA glycosylase (UDG) superfamily. UNG family.

It is found in the cytoplasm. The enzyme catalyses Hydrolyzes single-stranded DNA or mismatched double-stranded DNA and polynucleotides, releasing free uracil.. Functionally, excises uracil residues from the DNA which can arise as a result of misincorporation of dUMP residues by DNA polymerase or due to deamination of cytosine. The protein is Uracil-DNA glycosylase of Deinococcus geothermalis (strain DSM 11300 / CIP 105573 / AG-3a).